Here is a 363-residue protein sequence, read N- to C-terminus: 5-formaminoimidazole-4-carboxamide-1-(beta)-D-ribofuranosyl 5'-monophosphate synthetase (363 aa).

Residues His29 and Ser96 each contribute to the 5-amino-1-(5-phospho-beta-D-ribosyl)imidazole-4-carboxamide site. The region spanning Arg118–Arg350 is the ATP-grasp domain. Residues Pro148–Cys210 and Glu232 contribute to the ATP site. A 5-amino-1-(5-phospho-beta-D-ribosyl)imidazole-4-carboxamide-binding site is contributed by Asn260. 2 residues coordinate Mg(2+): Gln299 and Glu312.

This sequence belongs to the phosphohexose mutase family. Mg(2+) serves as cofactor. The cofactor is Mn(2+).

The catalysed reaction is 5-amino-1-(5-phospho-beta-D-ribosyl)imidazole-4-carboxamide + formate + ATP = 5-formamido-1-(5-phospho-D-ribosyl)imidazole-4-carboxamide + ADP + phosphate. It functions in the pathway purine metabolism; IMP biosynthesis via de novo pathway; 5-formamido-1-(5-phospho-D-ribosyl)imidazole-4-carboxamide from 5-amino-1-(5-phospho-D-ribosyl)imidazole-4-carboxamide (formate route): step 1/1. Catalyzes the ATP- and formate-dependent formylation of 5-aminoimidazole-4-carboxamide-1-beta-d-ribofuranosyl 5'-monophosphate (AICAR) to 5-formaminoimidazole-4-carboxamide-1-beta-d-ribofuranosyl 5'-monophosphate (FAICAR) in the absence of folates. The chain is 5-formaminoimidazole-4-carboxamide-1-(beta)-D-ribofuranosyl 5'-monophosphate synthetase from Methanothermobacter thermautotrophicus (strain ATCC 29096 / DSM 1053 / JCM 10044 / NBRC 100330 / Delta H) (Methanobacterium thermoautotrophicum).